The chain runs to 533 residues: tRNA(Ile)-lysidine synthase (533 aa).

ATP is bound at residue 27–32 (SGGSDS).

It belongs to the tRNA(Ile)-lysidine synthase family.

The protein resides in the cytoplasm. The enzyme catalyses cytidine(34) in tRNA(Ile2) + L-lysine + ATP = lysidine(34) in tRNA(Ile2) + AMP + diphosphate + H(+). In terms of biological role, ligates lysine onto the cytidine present at position 34 of the AUA codon-specific tRNA(Ile) that contains the anticodon CAU, in an ATP-dependent manner. Cytidine is converted to lysidine, thus changing the amino acid specificity of the tRNA from methionine to isoleucine. The protein is tRNA(Ile)-lysidine synthase of Rickettsia peacockii (strain Rustic).